The sequence spans 148 residues: uncharacterized protein (148 aa).

It localises to the plastid. It is found in the chloroplast. This is an uncharacterized protein from Porphyra purpurea (Red seaweed).